The chain runs to 175 residues: Alkyl hydroperoxide reductase AhpD (175 aa).

Catalysis depends on C131, which acts as the Proton donor. C131 and C134 are oxidised to a cystine. The Cysteine sulfenic acid (-SOH) intermediate role is filled by C134.

The protein belongs to the AhpD family.

The catalysed reaction is N(6)-[(R)-dihydrolipoyl]-L-lysyl-[lipoyl-carrier protein] + a hydroperoxide = N(6)-[(R)-lipoyl]-L-lysyl-[lipoyl-carrier protein] + an alcohol + H2O. Its function is as follows. Antioxidant protein with alkyl hydroperoxidase activity. Required for the reduction of the AhpC active site cysteine residues and for the regeneration of the AhpC enzyme activity. This chain is Alkyl hydroperoxide reductase AhpD, found in Brucella anthropi (strain ATCC 49188 / DSM 6882 / CCUG 24695 / JCM 21032 / LMG 3331 / NBRC 15819 / NCTC 12168 / Alc 37) (Ochrobactrum anthropi).